An 86-amino-acid chain; its full sequence is MKEGIHPNYREVVFQDMSSDFSFITRSTIQTKDTIVKDGKEYPLAKIEVSSESHPFYTGTQKIMDTAGRVEKFRQKFGNKLGKAAK.

It belongs to the bacterial ribosomal protein bL31 family. Type B subfamily. Part of the 50S ribosomal subunit.

The sequence is that of Large ribosomal subunit protein bL31B from Cupriavidus taiwanensis (strain DSM 17343 / BCRC 17206 / CCUG 44338 / CIP 107171 / LMG 19424 / R1) (Ralstonia taiwanensis (strain LMG 19424)).